The sequence spans 228 residues: Heptaprenylglyceryl phosphate synthase (228 aa).

Lys12 is a sn-glycerol 1-phosphate binding site. Positions 14 and 40 each coordinate Mg(2+). Sn-glycerol 1-phosphate is bound by residues 159-164 (YLEYSG), Gly189, and 209-210 (GN).

Belongs to the GGGP/HepGP synthase family. Group I subfamily. In terms of assembly, homodimer. Mg(2+) serves as cofactor.

It catalyses the reaction sn-glycerol 1-phosphate + all-trans-heptaprenyl diphosphate = 3-heptaprenyl-sn-glycero-1-phosphate + diphosphate. Its pathway is membrane lipid metabolism; glycerophospholipid metabolism. Its function is as follows. Prenyltransferase that catalyzes in vivo the transfer of the heptaprenyl moiety of heptaprenyl pyrophosphate (HepPP; 35 carbon atoms) to the C3 hydroxyl of sn-glycerol-1-phosphate (G1P), producing heptaprenylglyceryl phosphate (HepGP). This reaction is an ether-bond-formation step in the biosynthesis of archaea-type G1P-based membrane lipids found in Bacillales. The protein is Heptaprenylglyceryl phosphate synthase of Geobacillus sp. (strain WCH70).